Reading from the N-terminus, the 498-residue chain is U4/U6 small nuclear ribonucleoprotein Prp31 (498 aa).

Residues 1–24 (MSLADELLADLEEAAEEEEENLID) form a disordered region. The span at 7 to 24 (LLADLEEAAEEEEENLID) shows a compositional bias: acidic residues. Coiled coils occupy residues 84 to 119 (EAAP…KYSK) and 180 to 214 (DEEL…MSFI). The Nop domain occupies 214–332 (IAPNLSIIVG…IERKFDKWQE (119 aa)). The tract at residues 333 to 356 (PPPVKQVKPLPAPLDGQRKKRGGR) is disordered. The Nuclear localization signal (NLS) motif lies at 350–363 (RKKRGGRRYRKMKE).

Belongs to the PRP31 family. Identified in the spliceosome B complex. Component of the U4/U6-U5 tri-snRNP complex. Component of some MLL1/MLL complex.

Its subcellular location is the nucleus. The protein localises to the nucleus speckle. It localises to the cajal body. Involved in pre-mRNA splicing as component of the spliceosome. Required for the assembly of the U4/U5/U6 tri-snRNP complex, one of the building blocks of the spliceosome. The polypeptide is U4/U6 small nuclear ribonucleoprotein Prp31 (prpf31) (Xenopus laevis (African clawed frog)).